Here is a 547-residue protein sequence, read N- to C-terminus: Aspartate 1-decarboxylase (547 aa).

N6-(pyridoxal phosphate)lysine is present on lysine 338.

This sequence belongs to the group II decarboxylase family. The cofactor is pyridoxal 5'-phosphate.

The catalysed reaction is L-aspartate + H(+) = beta-alanine + CO2. It functions in the pathway cofactor biosynthesis; (R)-pantothenate biosynthesis; beta-alanine from L-aspartate: step 1/1. In terms of biological role, catalyzes the pyridoxal-dependent decarboxylation of aspartate to produce beta-alanine. Has weak activity with glutamate. The polypeptide is Aspartate 1-decarboxylase (Aliivibrio fischeri (strain ATCC 700601 / ES114) (Vibrio fischeri)).